The sequence spans 741 residues: Cytosolic phospholipase A2 (741 aa).

The C2 domain occupies 1–116 (MSNIIVEHQY…KVAQMEHVTL (116 aa)). Positions 1–172 (MSNIIVEHQY…IKKLLKMENP (172 aa)) are phospholipid binding. Ca(2+) is bound by residues Asp34, Thr35, Asp37, Asn59, Asp87, Ala88, and Asn89. In terms of domain architecture, PLA2c spans 132-729 (VCASTDLRFS…SLSEIENKKF (598 aa)). Ser223 (nucleophile) is an active-site residue. The tract at residues 406 to 453 (TSSSTMEEELEQIKPEHIVGDDSADNEEETQRGGTESADAEDERQRHA) is disordered. Residues 416–425 (EQIKPEHIVG) show a composition bias toward basic and acidic residues. Ser498 carries the phosphoserine; by MAPK modification. Asp540 (proton acceptor) is an active-site residue.

Post-translationally, activated by phosphorylation on a serine residue.

The protein resides in the cytoplasm. It is found in the cytoplasmic vesicle. It carries out the reaction a 1,2-diacyl-sn-glycero-3-phosphocholine + H2O = a 1-acyl-sn-glycero-3-phosphocholine + a fatty acid + H(+). It catalyses the reaction a 1-acyl-sn-glycero-3-phosphocholine + H2O = sn-glycerol 3-phosphocholine + a fatty acid + H(+). With respect to regulation, stimulated by agonists such as ATP, EGF, thrombin and bradykinin as well as by cytosolic Ca(2+). In terms of biological role, selectively hydrolyzes arachidonyl phospholipids in the sn-2 position releasing arachidonic acid. Together with its lysophospholipid activity, it is implicated in the initiation of the inflammatory response. This is Cytosolic phospholipase A2 (pla2g4a) from Danio rerio (Zebrafish).